Here is a 681-residue protein sequence, read N- to C-terminus: Peroxisomal acyl-coenzyme A oxidase 2 (681 aa).

A phosphoserine mark is found at S3 and S9. T13 is subject to Phosphothreonine. N6-succinyllysine occurs at positions 66, 137, 453, and 561. Positions 679-681 match the Microbody targeting signal motif; sequence SKL.

The protein belongs to the acyl-CoA oxidase family. Homodimer. It depends on FAD as a cofactor. In terms of tissue distribution, present in all tissues tested: heart, brain, placenta, lung, liver, skeletal muscle, kidney and pancreas. Most abundant in heart, liver and kidney.

It is found in the peroxisome. The catalysed reaction is (25R)-3alpha,7alpha,12alpha-trihydroxy-5beta-cholestan-26-oyl-CoA + A + H2O = (24R,25R)-3alpha,7alpha,12alpha,24-tetrahydroxy-5beta-cholestan-26-oyl-CoA + AH2. The enzyme catalyses (25S)-3alpha,7alpha,12alpha-trihydroxy-5beta-cholestan-26-oyl-CoA + O2 = (24E)-3alpha,7alpha,12alpha-trihydroxy-5beta-cholest-24-en-26-oyl-CoA + H2O2. Oxidizes the CoA esters of the bile acid intermediates di- and tri-hydroxycholestanoic acids. Capable of oxidizing short as well as long chain 2-methyl branched fatty acids. This Homo sapiens (Human) protein is Peroxisomal acyl-coenzyme A oxidase 2.